A 249-amino-acid polypeptide reads, in one-letter code: Pyridoxine 5'-phosphate synthase (249 aa).

Residue N12 coordinates 3-amino-2-oxopropyl phosphate. Position 14–15 (14–15 (DH)) interacts with 1-deoxy-D-xylulose 5-phosphate. Position 23 (R23) interacts with 3-amino-2-oxopropyl phosphate. The Proton acceptor role is filled by H48. The 1-deoxy-D-xylulose 5-phosphate site is built by R50 and H55. E75 acts as the Proton acceptor in catalysis. T105 lines the 1-deoxy-D-xylulose 5-phosphate pocket. The active-site Proton donor is the H199. Residues G200 and 221–222 (GH) contribute to the 3-amino-2-oxopropyl phosphate site.

It belongs to the PNP synthase family. In terms of assembly, homooctamer; tetramer of dimers.

It localises to the cytoplasm. It catalyses the reaction 3-amino-2-oxopropyl phosphate + 1-deoxy-D-xylulose 5-phosphate = pyridoxine 5'-phosphate + phosphate + 2 H2O + H(+). Its pathway is cofactor biosynthesis; pyridoxine 5'-phosphate biosynthesis; pyridoxine 5'-phosphate from D-erythrose 4-phosphate: step 5/5. Its function is as follows. Catalyzes the complicated ring closure reaction between the two acyclic compounds 1-deoxy-D-xylulose-5-phosphate (DXP) and 3-amino-2-oxopropyl phosphate (1-amino-acetone-3-phosphate or AAP) to form pyridoxine 5'-phosphate (PNP) and inorganic phosphate. This chain is Pyridoxine 5'-phosphate synthase, found in Roseobacter denitrificans (strain ATCC 33942 / OCh 114) (Erythrobacter sp. (strain OCh 114)).